The sequence spans 66 residues: Large ribosomal subunit protein bL33c (66 aa).

It belongs to the bacterial ribosomal protein bL33 family.

The protein localises to the plastid. It localises to the chloroplast. The chain is Large ribosomal subunit protein bL33c from Platanus occidentalis (Sycamore).